Here is a 485-residue protein sequence, read N- to C-terminus: MLDFMDYIQLSFAEATHWNRDNSYSSLNTTAQSILDFSTPERLRVHLSSLSTPHFATSYTLGTVGLLDGSVSYLFSTVPFDNLPSGSASIPLRKISPGYRQVQAPATPIETWGWDSLLDGVSIPGLTNGSRPEPPIPKDEESIKESEAKRKATLLHASLHLPPPSTLYALFLRRISSNMQLSLAVCSTQGPPQSKSAPQASMLTQLSHDTGKYSNEYLFSTDNALFGWRGLWNFGPDPRYTRDVPPPLSLLSAGAEAYYSPISSLIGMSTGLRFTTLPAATEIPPSSSPSSTRTPISTFPYTLTLTLAPIVGSLSTTYSLRASPNLAFSSRFGFNVYSWESEMVAGCELWRRTKKSDSSSDDDLEWARRKMRMHDFGVSLPGSPASPLLEDPARPEGPVSSNAHTEAETSDSVIKLRIDQSWNVRLLWEGRVKELLVSAGVGLGPGSFSLSPSVSSASGSGSAQSGGGPGMSYWRGVGVSVLYSS.

Disordered stretches follow at residues 126–145, 384–407, and 450–469; these read LTNGSRPEPPIPKDEESIKE, PASPLLEDPARPEGPVSSNAHTEA, and LSPSVSSASGSGSAQSGGGP. Positions 136 to 145 are enriched in basic and acidic residues; it reads IPKDEESIKE. Low complexity predominate over residues 450-463; it reads LSPSVSSASGSGSA.

It belongs to the MDM10 family. As to quaternary structure, component of the ER-mitochondria encounter structure (ERMES) or MDM complex, composed of mmm1, mdm10, mdm12 and mdm34. Associates with the mitochondrial outer membrane sorting assembly machinery SAM(core) complex.

It localises to the mitochondrion outer membrane. In terms of biological role, component of the ERMES/MDM complex, which serves as a molecular tether to connect the endoplasmic reticulum and mitochondria. Components of this complex are involved in the control of mitochondrial shape and protein biogenesis and may function in phospholipid exchange. mdm10 is involved in the late assembly steps of the general translocase of the mitochondrial outer membrane (TOM complex). Functions in the tom40-specific route of the assembly of outer membrane beta-barrel proteins, including the association of tom40 with the receptor tom22 and small TOM proteins. Can associate with the SAM(core) complex as well as the mdm12-mmm1 complex, both involved in late steps of the major beta-barrel assembly pathway, that is responsible for biogenesis of all outer membrane beta-barrel proteins. May act as a switch that shuttles between both complexes and channels precursor proteins into the tom40-specific pathway. Plays a role in mitochondrial morphology and in the inheritance of mitochondria. The protein is Mitochondrial distribution and morphology protein 10 (mdm10) of Penicillium rubens (strain ATCC 28089 / DSM 1075 / NRRL 1951 / Wisconsin 54-1255) (Penicillium chrysogenum).